A 349-amino-acid polypeptide reads, in one-letter code: Insulin gene enhancer protein ISL-1 (349 aa).

LIM zinc-binding domains follow at residues cysteine 17 to aspartate 70 and cysteine 79 to histidine 133. Positions threonine 181 to serine 240 form a DNA-binding region, homeobox. The tract at residues valine 312–alanine 349 is disordered. Over residues serine 321–valine 343 the composition is skewed to polar residues.

It is found in the nucleus. Acts as a transcriptional regulator. Recognizes and binds to the consensus octamer binding site 5'-ATAATTAA-3' in promoter of target genes. Plays a fundamental role in the gene regulatory network essential for retinal ganglion cell (RGC) differentiation. Binds to insulin gene enhancer sequences. Defines subclasses of motoneurons that segregate into columns in the spinal cord and select distinct axon pathways. Acts in conjunction with LHX1, LHX3 and ISL2. Binds to insulin gene enhancer sequences. Essential for heart development. This chain is Insulin gene enhancer protein ISL-1 (ISL1), found in Gallus gallus (Chicken).